The sequence spans 124 residues: Small ribosomal subunit protein uS12 (124 aa).

Residues 1–24 (MPTISQLVRKGRAKITKKSKSAAL) form a disordered region. A compositionally biased stretch (basic residues) spans 9-20 (RKGRAKITKKSK). Asp-89 is modified (3-methylthioaspartic acid). Residues 105–124 (AGVEGRTQRRSKYGAKRPKK) form a disordered region. Residues 112-124 (QRRSKYGAKRPKK) are compositionally biased toward basic residues.

This sequence belongs to the universal ribosomal protein uS12 family. As to quaternary structure, part of the 30S ribosomal subunit. Contacts proteins S8 and S17. May interact with IF1 in the 30S initiation complex.

Its function is as follows. With S4 and S5 plays an important role in translational accuracy. In terms of biological role, interacts with and stabilizes bases of the 16S rRNA that are involved in tRNA selection in the A site and with the mRNA backbone. Located at the interface of the 30S and 50S subunits, it traverses the body of the 30S subunit contacting proteins on the other side and probably holding the rRNA structure together. The combined cluster of proteins S8, S12 and S17 appears to hold together the shoulder and platform of the 30S subunit. The protein is Small ribosomal subunit protein uS12 of Christiangramia forsetii (strain DSM 17595 / CGMCC 1.15422 / KT0803) (Gramella forsetii).